Reading from the N-terminus, the 146-residue chain is Protein archease (146 aa).

The Ca(2+) site is built by Asp16, Asp145, and Ile146.

The protein belongs to the archease family.

Activates the tRNA-splicing ligase complex by facilitating the enzymatic turnover of catalytic subunit RtcB. Acts by promoting the guanylylation of RtcB, a key intermediate step in tRNA ligation. Can also alter the NTP specificity of RtcB such that ATP, dGTP or ITP is used efficiently. The sequence is that of Protein archease from Methanosarcina mazei (strain ATCC BAA-159 / DSM 3647 / Goe1 / Go1 / JCM 11833 / OCM 88) (Methanosarcina frisia).